The primary structure comprises 203 residues: GTP cyclohydrolase 1 (203 aa).

Zn(2+)-binding residues include Cys87, His90, and Cys158.

This sequence belongs to the GTP cyclohydrolase I family. As to quaternary structure, toroid-shaped homodecamer, composed of two pentamers of five dimers.

The enzyme catalyses GTP + H2O = 7,8-dihydroneopterin 3'-triphosphate + formate + H(+). The protein operates within cofactor biosynthesis; 7,8-dihydroneopterin triphosphate biosynthesis; 7,8-dihydroneopterin triphosphate from GTP: step 1/1. The chain is GTP cyclohydrolase 1 from Xylella fastidiosa (strain 9a5c).